The chain runs to 114 residues: rRNA-processing protein cgrA (114 aa).

A compositionally biased stretch (polar residues) spans 1–11; sequence MSSAIPTSSVN. Residues 1–114 form a disordered region; that stretch reads MSSAIPTSSV…REKRNKLLHS (114 aa). Residues 39-93 are compositionally biased toward basic and acidic residues; the sequence is YEKRLEARKRQEAVKEHERELREEKEAERKAQIQKIKDRRAAKEEKERYEKMAEK. Positions 40–101 form a coiled coil; that stretch reads EKRLEARKRQ…EKMHRKRVER (62 aa). Positions 94 to 114 are enriched in basic residues; sequence MHRKRVERLKRREKRNKLLHS.

It belongs to the CGR1 family.

Its subcellular location is the nucleus. It localises to the nucleolus. Involved in nucleolar integrity and required for processing of the pre-rRNA for the 60S ribosome subunit. This chain is rRNA-processing protein cgrA (cgrA), found in Aspergillus fumigatus (strain ATCC MYA-4609 / CBS 101355 / FGSC A1100 / Af293) (Neosartorya fumigata).